Here is a 123-residue protein sequence, read N- to C-terminus: Small ribosomal subunit protein uS12 (123 aa).

Residue D89 is modified to 3-methylthioaspartic acid.

It belongs to the universal ribosomal protein uS12 family. As to quaternary structure, part of the 30S ribosomal subunit. Contacts proteins S8 and S17. May interact with IF1 in the 30S initiation complex.

Its function is as follows. With S4 and S5 plays an important role in translational accuracy. Interacts with and stabilizes bases of the 16S rRNA that are involved in tRNA selection in the A site and with the mRNA backbone. Located at the interface of the 30S and 50S subunits, it traverses the body of the 30S subunit contacting proteins on the other side and probably holding the rRNA structure together. The combined cluster of proteins S8, S12 and S17 appears to hold together the shoulder and platform of the 30S subunit. The polypeptide is Small ribosomal subunit protein uS12 (Gluconobacter oxydans (strain 621H) (Gluconobacter suboxydans)).